A 188-amino-acid polypeptide reads, in one-letter code: Peptide deformylase (188 aa).

Residues C107 and H149 each contribute to the Fe cation site. E150 is an active-site residue. Residue H153 participates in Fe cation binding.

Belongs to the polypeptide deformylase family. Requires Fe(2+) as cofactor.

It carries out the reaction N-terminal N-formyl-L-methionyl-[peptide] + H2O = N-terminal L-methionyl-[peptide] + formate. Its function is as follows. Removes the formyl group from the N-terminal Met of newly synthesized proteins. Requires at least a dipeptide for an efficient rate of reaction. N-terminal L-methionine is a prerequisite for activity but the enzyme has broad specificity at other positions. This Thermosynechococcus vestitus (strain NIES-2133 / IAM M-273 / BP-1) protein is Peptide deformylase.